The following is a 480-amino-acid chain: Probable E3 ubiquitin protein ligase DRIPH (480 aa).

The segment at 16–57 (CPICTNPFKDATTISECLHTFCRSCIRNKFINERVNACPVCN) adopts an RING-type zinc-finger fold. Disordered stretches follow at residues 93-133 (GPKT…EPAN), 167-193 (RGRK…PKIK), 241-261 (TPPD…ESVE), and 280-356 (VNQN…EMKV). The span at 103–112 (SSKKKRKSRT) shows a compositional bias: basic residues. The span at 113–133 (SLRVSSSRVSSSPDTPLEPAN) shows a compositional bias: low complexity. The span at 175–193 (KKIDSKPEPELPPKEPKIK) shows a compositional bias: basic and acidic residues. Residues 246-260 (VEPEISSDDDTEESV) are compositionally biased toward acidic residues. Residues 298–309 (GQKLKTNGAATS) are compositionally biased toward polar residues.

It catalyses the reaction S-ubiquitinyl-[E2 ubiquitin-conjugating enzyme]-L-cysteine + [acceptor protein]-L-lysine = [E2 ubiquitin-conjugating enzyme]-L-cysteine + N(6)-ubiquitinyl-[acceptor protein]-L-lysine.. Its pathway is protein modification; protein ubiquitination. In Arabidopsis thaliana (Mouse-ear cress), this protein is Probable E3 ubiquitin protein ligase DRIPH.